A 262-amino-acid polypeptide reads, in one-letter code: Carboxy-S-adenosyl-L-methionine synthase (262 aa).

Residues Y50, 84–86 (GCS), 137–138 (DI), N152, and R219 contribute to the S-adenosyl-L-methionine site.

Belongs to the class I-like SAM-binding methyltransferase superfamily. Cx-SAM synthase family. In terms of assembly, homodimer.

It carries out the reaction prephenate + S-adenosyl-L-methionine = carboxy-S-adenosyl-L-methionine + 3-phenylpyruvate + H2O. Its function is as follows. Catalyzes the conversion of S-adenosyl-L-methionine (SAM) to carboxy-S-adenosyl-L-methionine (Cx-SAM). This Psychrobacter arcticus (strain DSM 17307 / VKM B-2377 / 273-4) protein is Carboxy-S-adenosyl-L-methionine synthase.